The following is a 208-amino-acid chain: Phosphoheptose isomerase (208 aa).

Residues 38-200 form the SIS domain; the sequence is MALTLARGRK…LFENVLALQP (163 aa). Residue 53-55 participates in substrate binding; that stretch reads NGG. Positions 62 and 66 each coordinate Zn(2+). Residues E66, 95–96, 121–123, S126, and Q173 contribute to the substrate site; these read ND and STS. Zn(2+) is bound by residues Q173 and H181.

The protein belongs to the SIS family. GmhA subfamily. As to quaternary structure, homotetramer. Zn(2+) is required as a cofactor.

It is found in the cytoplasm. It catalyses the reaction 2 D-sedoheptulose 7-phosphate = D-glycero-alpha-D-manno-heptose 7-phosphate + D-glycero-beta-D-manno-heptose 7-phosphate. The protein operates within carbohydrate biosynthesis; D-glycero-D-manno-heptose 7-phosphate biosynthesis; D-glycero-alpha-D-manno-heptose 7-phosphate and D-glycero-beta-D-manno-heptose 7-phosphate from sedoheptulose 7-phosphate: step 1/1. Functionally, catalyzes the isomerization of sedoheptulose 7-phosphate in D-glycero-D-manno-heptose 7-phosphate. In Nitratidesulfovibrio vulgaris (strain DSM 19637 / Miyazaki F) (Desulfovibrio vulgaris), this protein is Phosphoheptose isomerase.